The sequence spans 338 residues: L-serine dehydratase (338 aa).

Lysine 39 carries the N6-(pyridoxal phosphate)lysine modification.

The protein belongs to the serine/threonine dehydratase family. Pyridoxal 5'-phosphate serves as cofactor.

It is found in the cytoplasm. The enzyme catalyses L-serine = pyruvate + NH4(+). Its pathway is carbohydrate biosynthesis; gluconeogenesis. The chain is L-serine dehydratase (SDL1) from Saccharomyces cerevisiae (Baker's yeast).